A 324-amino-acid polypeptide reads, in one-letter code: Putative S-adenosyl-L-methionine-dependent methyltransferase MUL_0818 (324 aa).

S-adenosyl-L-methionine-binding positions include Asp138 and 167–168 (DL).

Belongs to the UPF0677 family.

Functionally, exhibits S-adenosyl-L-methionine-dependent methyltransferase activity. This Mycobacterium ulcerans (strain Agy99) protein is Putative S-adenosyl-L-methionine-dependent methyltransferase MUL_0818.